The chain runs to 284 residues: NAD kinase (284 aa).

D70 (proton acceptor) is an active-site residue. Residues 70–71 (DG), 139–140 (NE), K167, D169, L177, 180–185 (TAYNLS), and Q236 each bind NAD(+).

It belongs to the NAD kinase family. The cofactor is a divalent metal cation.

It is found in the cytoplasm. The enzyme catalyses NAD(+) + ATP = ADP + NADP(+) + H(+). In terms of biological role, involved in the regulation of the intracellular balance of NAD and NADP, and is a key enzyme in the biosynthesis of NADP. Catalyzes specifically the phosphorylation on 2'-hydroxyl of the adenosine moiety of NAD to yield NADP. This chain is NAD kinase, found in Helicobacter pylori (strain G27).